Here is a 494-residue protein sequence, read N- to C-terminus: Glutamate decarboxylase 5 (494 aa).

An N6-(pyridoxal phosphate)lysine modification is found at K276.

The protein belongs to the group II decarboxylase family. Homohexamer. Interacts with calmodulin. Requires pyridoxal 5'-phosphate as cofactor. As to expression, expressed in flowers.

The enzyme catalyses L-glutamate + H(+) = 4-aminobutanoate + CO2. In terms of biological role, catalyzes the production of GABA. The calmodulin-binding is calcium-dependent and it is proposed that this may, directly or indirectly, form a calcium regulated control of GABA biosynthesis. The chain is Glutamate decarboxylase 5 (GAD5) from Arabidopsis thaliana (Mouse-ear cress).